We begin with the raw amino-acid sequence, 552 residues long: Membrane protein insertase YidC (552 aa).

Residues Thr-3–Trp-23 form a helical membrane-spanning segment. The disordered stretch occupies residues Pro-29–Ala-65. The next 4 membrane-spanning stretches (helical) occupy residues Trp-359–Ala-379, Leu-429–Val-449, Leu-463–Gln-483, and Pro-503–Val-523.

It belongs to the OXA1/ALB3/YidC family. Type 1 subfamily. As to quaternary structure, interacts with the Sec translocase complex via SecD. Specifically interacts with transmembrane segments of nascent integral membrane proteins during membrane integration.

The protein localises to the cell inner membrane. Its function is as follows. Required for the insertion and/or proper folding and/or complex formation of integral membrane proteins into the membrane. Involved in integration of membrane proteins that insert both dependently and independently of the Sec translocase complex, as well as at least some lipoproteins. Aids folding of multispanning membrane proteins. The sequence is that of Membrane protein insertase YidC from Methylobacillus flagellatus (strain ATCC 51484 / DSM 6875 / VKM B-1610 / KT).